A 285-amino-acid chain; its full sequence is Bifunctional protein FolD (285 aa).

NADP(+) contacts are provided by residues 165-167 (GRS) and Ser-190.

The protein belongs to the tetrahydrofolate dehydrogenase/cyclohydrolase family. As to quaternary structure, homodimer.

The catalysed reaction is (6R)-5,10-methylene-5,6,7,8-tetrahydrofolate + NADP(+) = (6R)-5,10-methenyltetrahydrofolate + NADPH. It catalyses the reaction (6R)-5,10-methenyltetrahydrofolate + H2O = (6R)-10-formyltetrahydrofolate + H(+). Its pathway is one-carbon metabolism; tetrahydrofolate interconversion. In terms of biological role, catalyzes the oxidation of 5,10-methylenetetrahydrofolate to 5,10-methenyltetrahydrofolate and then the hydrolysis of 5,10-methenyltetrahydrofolate to 10-formyltetrahydrofolate. The polypeptide is Bifunctional protein FolD (Streptococcus pneumoniae serotype 4 (strain ATCC BAA-334 / TIGR4)).